We begin with the raw amino-acid sequence, 147 residues long: MADITLISGSTLGGAEYVAEHLAEKLEEAGFTTETLHGPLLEDLPASGIWLVISSTHGAGDIPDNLSPFYEALQEQKPDLSAVRFGAIGIGSREYDTFCGAIDKLEAELKNSGAKQTGETLKINILDHDIPEDPAEEWLGSWVNLLK.

A Flavodoxin-like domain is found at 4–143 (ITLISGSTLG…PAEEWLGSWV (140 aa)).

It belongs to the flavodoxin family. MioC subfamily. As to quaternary structure, homodimer. FMN is required as a cofactor.

Its function is as follows. Probable electron transporter required for biotin synthase activity. The sequence is that of Protein MioC (mioC) from Escherichia coli (strain K12).